Consider the following 342-residue polypeptide: MSDVIKTDVLIIGAGPCGLFAAFELGLLDMKAHFVDILDKVGGQCAELYPEKPIYDIPGIPHVSGQGLTDALMEQIKPFHPTFHLGEMVETVEKIGDPAFRCTTDAGKVFECKVLVIAAGGGSFQPKRPPVPGIEAYEGTSVHYAVRKMETFRDKNVLIVGGGDSALDWTLNLHPVAKRITLLHRRDEFRAAPHSVEQMRALVAAGKMDLRLGQVTSLAGTDGKLTGATIKGNDNNVTEIACDAMLPFFGLTMKLGPVANWGIALENNLVPVETSAFETNISGIFAIGDINTYPGKIKLILCGFHEGALMSQKAHRYVYPEKRLVFQYTTSSSSLQKKLGVS.

FAD-binding residues include Cys-17, Asp-36, Gln-44, Tyr-49, Val-89, Phe-124, Asp-289, and Thr-330.

It belongs to the ferredoxin--NADP reductase type 2 family. As to quaternary structure, homodimer. Requires FAD as cofactor.

It carries out the reaction 2 reduced [2Fe-2S]-[ferredoxin] + NADP(+) + H(+) = 2 oxidized [2Fe-2S]-[ferredoxin] + NADPH. The polypeptide is Ferredoxin--NADP reductase (Bradyrhizobium diazoefficiens (strain JCM 10833 / BCRC 13528 / IAM 13628 / NBRC 14792 / USDA 110)).